Consider the following 75-residue polypeptide: Penaeidin-3m (75 aa).

The first 19 residues, M1 to G19, serve as a signal peptide directing secretion. At Q20 the chain carries Pyrrolidone carboxylic acid. Disulfide bonds link C44–C59, C48–C66, and C60–C67. At S74 the chain carries Serine amide.

The protein belongs to the penaeidin family.

It localises to the cytoplasmic granule. Antibacterial and antifungal activity. Presents chitin-binding activity. The chain is Penaeidin-3m from Penaeus setiferus (Atlantic white shrimp).